Here is a 442-residue protein sequence, read N- to C-terminus: NADH-quinone oxidoreductase subunit D (442 aa).

Belongs to the complex I 49 kDa subunit family. In terms of assembly, NDH-1 is composed of 14 different subunits. Subunits NuoB, C, D, E, F, and G constitute the peripheral sector of the complex.

The protein resides in the cell membrane. It catalyses the reaction a quinone + NADH + 5 H(+)(in) = a quinol + NAD(+) + 4 H(+)(out). NDH-1 shuttles electrons from NADH, via FMN and iron-sulfur (Fe-S) centers, to quinones in the respiratory chain. The immediate electron acceptor for the enzyme in this species is believed to be a menaquinone. Couples the redox reaction to proton translocation (for every two electrons transferred, four hydrogen ions are translocated across the cytoplasmic membrane), and thus conserves the redox energy in a proton gradient. The polypeptide is NADH-quinone oxidoreductase subunit D (Mycolicibacterium vanbaalenii (strain DSM 7251 / JCM 13017 / BCRC 16820 / KCTC 9966 / NRRL B-24157 / PYR-1) (Mycobacterium vanbaalenii)).